We begin with the raw amino-acid sequence, 570 residues long: Membrane protein insertase YidC (570 aa).

Over residues 31 to 60 (QQPVAQTPSVTIDSNGADSSALLNSPNTGE) the composition is skewed to polar residues. Positions 31-79 (QQPVAQTPSVTIDSNGADSSALLNSPNTGELDTPETASKPATAEDSNIS) are disordered. The next 5 helical transmembrane spans lie at 230-250 (PTFS…STPE), 378-398 (WGIA…HLSA), 444-464 (LGGC…YWVL), 487-507 (PYFV…SLNP), and 522-542 (PIIF…YWLV).

Belongs to the OXA1/ALB3/YidC family. Type 1 subfamily. As to quaternary structure, interacts with the Sec translocase complex via SecD. Specifically interacts with transmembrane segments of nascent integral membrane proteins during membrane integration.

Its subcellular location is the cell inner membrane. Its function is as follows. Required for the insertion and/or proper folding and/or complex formation of integral membrane proteins into the membrane. Involved in integration of membrane proteins that insert both dependently and independently of the Sec translocase complex, as well as at least some lipoproteins. Aids folding of multispanning membrane proteins. This is Membrane protein insertase YidC from Hahella chejuensis (strain KCTC 2396).